The primary structure comprises 561 residues: MPENLRSQLVTKGVQRAPNRAMLRAVGFEDSDFTKPIIGVANAHSTITPCNMGINDLAMRAVSGVKEAGGMPQIFGTITISDGISMGTEGMKYSLVSRDVIADSIETVCNGQTMDGVLAIGGCDKNMPGAMIAIARMNIPAIFVYGGTIKPGNYNGKDLTVVSAFEAVGEYSAGKIDETELTEVERRACPGAGSCGGMFTANTMSSAFEAMGMSLMYSSTMAAEDAEKADSTEKSAHVLVEAIRKQILPSQIITRKAIENAISVIMAVGGSTNAVLHLLAIAYAANVKLSLDDFEIIRARVPVLCDLKPSGKYVTTNLHQAGGIPLVMKMLLEHDLLHPDALTITGKTIGEQLTNIPSEPPSNQDVIRPWNNPMYAQGHLAILKGNLATEGAVAKITGVKNPEITGLARVFDSEEACLEAILAGKIQAGNIIVVRYEGPKGGPGMREMLAPTSAIIGAGLGDKVGLITDGRFSGGTYGMVVGHVAPEAAVGGTIALVKEGDMITIDAHKRLLQLNISDEELEKRRQVWKPRKPQYTRGVLAKYAKLVSSSSVGAVTDAGLG.

C50 provides a ligand contact to [2Fe-2S] cluster. A Mg(2+)-binding site is contributed by D82. C123 contributes to the [2Fe-2S] cluster binding site. Positions 124 and 125 each coordinate Mg(2+). Residue K125 is modified to N6-carboxylysine. Residue C195 participates in [2Fe-2S] cluster binding. E447 contacts Mg(2+). The Proton acceptor role is filled by S473.

The protein belongs to the IlvD/Edd family. Homodimer. The cofactor is [2Fe-2S] cluster. It depends on Mg(2+) as a cofactor.

The enzyme catalyses (2R)-2,3-dihydroxy-3-methylbutanoate = 3-methyl-2-oxobutanoate + H2O. It carries out the reaction (2R,3R)-2,3-dihydroxy-3-methylpentanoate = (S)-3-methyl-2-oxopentanoate + H2O. Its pathway is amino-acid biosynthesis; L-isoleucine biosynthesis; L-isoleucine from 2-oxobutanoate: step 3/4. It functions in the pathway amino-acid biosynthesis; L-valine biosynthesis; L-valine from pyruvate: step 3/4. In terms of biological role, functions in the biosynthesis of branched-chain amino acids. Catalyzes the dehydration of (2R,3R)-2,3-dihydroxy-3-methylpentanoate (2,3-dihydroxy-3-methylvalerate) into 2-oxo-3-methylpentanoate (2-oxo-3-methylvalerate) and of (2R)-2,3-dihydroxy-3-methylbutanoate (2,3-dihydroxyisovalerate) into 2-oxo-3-methylbutanoate (2-oxoisovalerate), the penultimate precursor to L-isoleucine and L-valine, respectively. The polypeptide is Dihydroxy-acid dehydratase (Trichodesmium erythraeum (strain IMS101)).